A 78-amino-acid polypeptide reads, in one-letter code: Conotoxin TsMSGL-13 (78 aa).

The signal sequence occupies residues 1 to 24; it reads MSGLGIMVLTLLLFMFMATSHQDA. The propeptide occupies 25–44; sequence GEKQATQRDAINVRRRRSIT. 3 cysteine pairs are disulfide-bonded: C51/C63, C55/C72, and C62/C76. F77 carries the post-translational modification Phenylalanine amide.

Belongs to the conotoxin O3 superfamily. In terms of tissue distribution, expressed by the venom duct.

The protein resides in the secreted. This is Conotoxin TsMSGL-13 from Conus tessulatus (Tessellate cone).